Consider the following 863-residue polypeptide: Alanine--tRNA ligase (863 aa).

Zn(2+) is bound by residues His552, His556, Cys654, and His658.

Belongs to the class-II aminoacyl-tRNA synthetase family. The cofactor is Zn(2+).

It is found in the cytoplasm. It catalyses the reaction tRNA(Ala) + L-alanine + ATP = L-alanyl-tRNA(Ala) + AMP + diphosphate. Catalyzes the attachment of alanine to tRNA(Ala) in a two-step reaction: alanine is first activated by ATP to form Ala-AMP and then transferred to the acceptor end of tRNA(Ala). Also edits incorrectly charged Ser-tRNA(Ala) and Gly-tRNA(Ala) via its editing domain. The protein is Alanine--tRNA ligase of Halorhodospira halophila (strain DSM 244 / SL1) (Ectothiorhodospira halophila (strain DSM 244 / SL1)).